The sequence spans 307 residues: MAALYACTKCHQRFPFEALSQGQQLCKECRIAHPVVKCTYCRTEYQQESKTNTICKKCAQNVQLYGTPKPCQYCNIIAAFIGNKCQRCTNSEKKYGPPYSCEQCKQQCAFDRKDDRKKVDGKLLCWLCTLSYKRVLQKTKEQRKHLSSSSRASHHEKEQYSRLSGGSHYNSQKTLSTSSIQNEIPKKKSKFESITTNGDSFSPDLALDSPGTDHFVIIAQLKEEVATLKKMLHQKDQMILEKEKKITELKADFQYQESQMRAKMNQMEKTHKEVTEQLQAKNRELLKQAAALSKSKKSEKSGAITSP.

Disordered stretches follow at residues 142-195 (QRKH…ESIT) and 287-307 (KQAA…ITSP). Over residues 161–182 (SRLSGGSHYNSQKTLSTSSIQN) the composition is skewed to polar residues. Residues 217–299 (IIAQLKEEVA…AALSKSKKSE (83 aa)) are a coiled coil.

The protein belongs to the FAM76 family.

This Bos taurus (Bovine) protein is Protein FAM76A (FAM76A).